The sequence spans 775 residues: Melanoma-associated antigen D1 (775 aa).

The interval 37–330 (SEAPPTSQAT…PARQTPSAWQ (294 aa)) is disordered. Over residues 39–50 (APPTSQATAAAS) the composition is skewed to low complexity. Polar residues-rich tracts occupy residues 52–63 (PNASPQSSQPPT), 84–100 (KAQN…SQAR), 107–120 (KNQS…QNGT), 149–178 (GQNS…NQPK), 221–235 (AQTS…NVES), 247–258 (VNNLNVEENNSG), and 296–308 (LAWQ…QNQT). 19 consecutive repeat copies span residues 292-297 (WQTPLA), 298-303 (WQNPSG), 304-309 (WQNQTA), 329-334 (WQNPVA), 335-340 (WQNPVI), 341-346 (WPNPVI), 347-352 (WQNPVI), 353-358 (WPNPIV), 359-364 (WPGPIV), 365-370 (WPNPMA), 371-376 (WQSTPG), 377-382 (WQSPPS), 383-388 (WQAPPS), 389-394 (WQSPQD), 395-400 (WQGPPD), 401-406 (WQVPPD), 407-412 (WSMPPD), 413-418 (WSFPSD), and 419-424 (WPFPPD). A 22 X 6 AA tandem repeats of W-[PQ]-X-P-X-X region spans residues 292-441 (WQTPLAWQNP…IPPDWQNLRP (150 aa)). Residues 309–326 (ARQTPPAARQSPPARQTP) are compositionally biased toward low complexity. The interval 374-409 (TPGWQSPPSWQAPPSWQSPQDWQGPPDWQVPPDWSM) is disordered. Low complexity predominate over residues 375-406 (PGWQSPPSWQAPPSWQSPQDWQGPPDWQVPPD). The 20; approximate repeat unit spans residues 425–429 (WIPAD). 2 repeat units span residues 430-435 (WPIPPD) and 436-441 (WQNLRP). Over residues 437–452 (QNLRPSPNLRSSSNSR) the composition is skewed to low complexity. The disordered stretch occupies residues 437–463 (QNLRPSPNLRSSSNSRASQNQGPPQPR). The MAGE domain maps to 468-666 (LQERANKLVK…RDWTAQFMEA (199 aa)).

As to quaternary structure, interacts with DLX5, DLX7 and MSX2 and forms homomultimers. Interacts with UNC5A. Interacts with TRIM28 and PJA1. Interacts with NGFR/p75NTR and RORA. In terms of tissue distribution, ubiquitously expressed in many adult tissues, except for the spleen. Expressed in osteoblastic and chondrogenic cell lines and also during embryonic development.

It localises to the nucleus. Its subcellular location is the cytoplasm. The protein resides in the cell membrane. Involved in the apoptotic response after nerve growth factor (NGF) binding in neuronal cells. Inhibits cell cycle progression, and facilitates NGFR-mediated apoptosis. May act as a regulator of the function of DLX family members. May enhance ubiquitin ligase activity of RING-type zinc finger-containing E3 ubiquitin-protein ligases. Proposed to act through recruitment and/or stabilization of the Ubl-conjugating enzyme (E2) at the E3:substrate complex. Plays a role in the circadian rhythm regulation. May act as RORA coregulator, modulating the expression of core clock genes such as BMAL1 and NFIL3, induced, or NR1D1, repressed. The sequence is that of Melanoma-associated antigen D1 (Maged1) from Mus musculus (Mouse).